The primary structure comprises 295 residues: MDRIALMDASGRDWSAWPAPAKLNLFLQITGRRADGYHLLQTVFRLLDWGDTVHLRVRRDGQIRRLGESLPGVSEDDDLVTRAARLLQSAAGTQAGAEIRVDKRIPAGGGFGGGSSDAATVLVALNALWGLGLAADVLAELGLQLGADVPVFVRGRNAWAEGVGEQLTPISLPEAAYLLVDPGVHVPTPALFRSQELTRDAALAKIADFASGSLLDNAFEPVLRRREPAVEAVFQALSRVGTPRLTGSGSGCFVEFATRAAAEQALAQLPGSLRAWVVEGAAHSPLLDALDATQV.

K22 is an active-site residue. 106-116 (PAGGGFGGGSS) is an ATP binding site. The active site involves D148.

This sequence belongs to the GHMP kinase family. IspE subfamily.

It catalyses the reaction 4-CDP-2-C-methyl-D-erythritol + ATP = 4-CDP-2-C-methyl-D-erythritol 2-phosphate + ADP + H(+). Its pathway is isoprenoid biosynthesis; isopentenyl diphosphate biosynthesis via DXP pathway; isopentenyl diphosphate from 1-deoxy-D-xylulose 5-phosphate: step 3/6. Functionally, catalyzes the phosphorylation of the position 2 hydroxy group of 4-diphosphocytidyl-2C-methyl-D-erythritol. This is 4-diphosphocytidyl-2-C-methyl-D-erythritol kinase from Xanthomonas euvesicatoria pv. vesicatoria (strain 85-10) (Xanthomonas campestris pv. vesicatoria).